A 237-amino-acid chain; its full sequence is N-alpha-acetyltransferase 40 (237 aa).

The N-myristoyl glycine moiety is linked to residue Gly-2. Residues 63-216 (SGLEPATVDW…EDCSYEILSR (154 aa)) enclose the N-acetyltransferase domain. Residues Tyr-85, 127 to 129 (DVE), and Tyr-138 contribute to the substrate site. Acetyl-CoA contacts are provided by residues 140-142 (VQL) and 148-153 (RKGLGK). Thr-174 serves as a coordination point for substrate. Acetyl-CoA is bound at residue Asn-179. 2 residues coordinate substrate: Ser-197 and Tyr-211.

It belongs to the acetyltransferase family. NAA40 subfamily.

Its subcellular location is the cytoplasm. The protein resides in the nucleus. It carries out the reaction N-terminal L-seryl-[histone H4] + acetyl-CoA = N-terminal N(alpha)-acetyl-L-seryl-[histone H4] + CoA + H(+). It catalyses the reaction N-terminal L-seryl-[histone H2A] + acetyl-CoA = N-terminal N(alpha)-acetyl-L-seryl-[histone H2A] + CoA + H(+). In terms of biological role, N-alpha-acetyltransferase that specifically mediates the acetylation of the N-terminal residues of histones H4 and H2A. In contrast to other N-alpha-acetyltransferase, has a very specific selectivity for histones H4 and H2A N-terminus and specifically recognizes the 'Ser-Gly-Arg-Gly sequence'. Acts as a negative regulator of apoptosis. May play a role in hepatic lipid metabolism. In Mus musculus (Mouse), this protein is N-alpha-acetyltransferase 40.